The primary structure comprises 1784 residues: Sodium channel protein type 4 subunit alpha B (1784 aa).

Residues 1–130 (MARLLPPTGT…RAAIRILIHS (130 aa)) are Cytoplasmic-facing. The segment at 29–48 (AEEAAEQERMKEQNVKVAEE) is disordered. One copy of the I repeat lies at 112-429 (CLSPFNPVRR…VVAMAYAEQN (318 aa)). A helical transmembrane segment spans residues 131–149 (LFSLVIMLTILTNCVFMAM). The Extracellular segment spans residues 150–156 (SDPPGWS). Residues 157–177 (KILEYVFTGIYTFEAMVKVLS) traverse the membrane as a helical segment. At 178 to 191 (RGFCIGDFTFLRDP) the chain is on the cytoplasmic side. Residues 192–209 (WNWLDFMVISMAYLTEFV) form a helical membrane-spanning segment. At 210–215 (DLGNIS) the chain is on the extracellular side. An N-linked (GlcNAc...) asparagine glycan is attached at asparagine 213. A helical membrane pass occupies residues 216–232 (ALRTFRVLRALKTITVI). Residues 233–251 (PGLKTIVGALIQSVKKLAD) are Cytoplasmic-facing. The chain crosses the membrane as a helical span at residues 252–271 (VMILTVFCLSVFALIGLQLF). The Extracellular portion of the chain corresponds to 272–366 (MGNLRQKCVL…PNYGYTSYDN (95 aa)). Residues cysteine 279 and cysteine 335 are joined by a disulfide bond. Residues asparagine 291, asparagine 304, and asparagine 337 are each glycosylated (N-linked (GlcNAc...) asparagine). A disulfide bridge connects residues cysteine 344 and cysteine 350. An intramembrane region (pore-forming) is located at residues 367–391 (FGWAFLALFRLMTQDFWENLFQLTL). Residues 392 to 398 (RAAGKTY) lie on the Extracellular side of the membrane. A helical transmembrane segment spans residues 399-419 (MIFFVVIIFLGSFYLINLILA). The Cytoplasmic segment spans residues 420–568 (VVAMAYAEQN…RIVYLFVMDP (149 aa)). A disordered region spans residues 455-478 (EQKNGMVNGSKTSLSSKKKGDNDQ). Residues 550-821 (CCIPWVKFKR…QIAISRITRG (272 aa)) form an II repeat. The chain crosses the membrane as a helical span at residues 569–587 (FVDLGITLCIVLNTVFMAM). The Extracellular portion of the chain corresponds to 588–598 (EHYPMSVHVEE). Residues 599 to 618 (VLAIGNLVFTGIFAAEMVLK) form a helical membrane-spanning segment. At 619–632 (LIALDPYYYFQVGW) the chain is on the cytoplasmic side. A helical membrane pass occupies residues 633–652 (NIFDSIIVTMSLVELMLADV). At 653–654 (EG) the chain is on the extracellular side. The chain crosses the membrane as a helical span at residues 655–672 (LSVLRSFRLMRVFKLAKS). Residues 673 to 688 (WPTLNMLIKIIGNSVG) lie on the Cytoplasmic side of the membrane. Residues 689 to 707 (ALGNLTLVLAIIVFIFAVV) traverse the membrane as a helical segment. Topologically, residues 708–736 (GMQLFGKSYTDSVCKISSDCELPRWHMAD) are extracellular. Cysteine 721 and cysteine 727 form a disulfide bridge. Positions 737-757 (FFHAFLIIFRVLCGEWIETMW) form an intramembrane region, pore-forming. Over 758-768 (DCMEVAGQGMC) the chain is Extracellular. Cysteines 759 and 768 form a disulfide. A helical membrane pass occupies residues 769–787 (IIVFMMVMVIGNLVVLNLF). The Cytoplasmic segment spans residues 788–973 (LALLLSSFSG…TCFAIVEHSY (186 aa)). Positions 870 to 928 (PIANGESDDDDGNGSSEDEDDEGRDINMKKKNGDESSTCSTVDKPPEVEDLVEEEEEDL) are disordered. The segment covering 875-892 (ESDDDDGNGSSEDEDDEG) has biased composition (acidic residues). Basic and acidic residues predominate over residues 893 to 903 (RDINMKKKNGD). The segment covering 917–928 (VEDLVEEEEEDL) has biased composition (acidic residues). The III repeat unit spans residues 954–1269 (KGKAWWNFRK…KKYYNAMKKL (316 aa)). Residues 974–991 (FETFIIFMILLSSGALAF) traverse the membrane as a helical segment. Residues 992–1004 (EDIYIEQRRMIKI) are Extracellular-facing. The chain crosses the membrane as a helical span at residues 1005-1023 (ILEYADQVFTYVFVVEMLL). Residues 1024-1037 (KWVAYGFKVYFTNA) lie on the Cytoplasmic side of the membrane. Residues 1038–1056 (WCWLDFLIVDVSLISLTAN) form a helical membrane-spanning segment. Residues 1057-1064 (ILGYSELG) lie on the Extracellular side of the membrane. Residues 1065-1083 (AIKSLRTLRALRPLRALSR) traverse the membrane as a helical segment. Residues 1084-1101 (FEGMRVVVVNALVGAIPS) lie on the Cytoplasmic side of the membrane. The helical transmembrane segment at 1102 to 1121 (IFNVLLVCLIFWLIFSIMGV) threads the bilayer. Over 1122-1173 (NLFAGKFYYCFNETSEEVFDHNVVNNKTDCYELMEFHPEVRWMNGKINFDNV) the chain is Extracellular. Cysteine 1131 and cysteine 1151 are disulfide-bonded. Residues asparagine 1133 and asparagine 1147 are each glycosylated (N-linked (GlcNAc...) asparagine). The pore-forming intramembrane region spans 1174–1195 (GMGYLALLQVATFKGWMDIMYS). Residues 1196-1212 (AVDSRAIESQPVYEANL) are Extracellular-facing. Residues 1213–1234 (YMYIYFVIFIIFGSFFTLNLFI) traverse the membrane as a helical segment. The Cytoplasmic segment spans residues 1235 to 1297 (GVIIDNFNQQ…LVFDFVTQQF (63 aa)). The tract at residues 1253 to 1255 (IFM) is important for rapid channel inactivation. The IV repeat unit spans residues 1278 to 1575 (IPRPTNCCQG…WEKFDPTASQ (298 aa)). Residues 1298–1315 (FDIFIMVMICLNMVTMMV) traverse the membrane as a helical segment. The Extracellular segment spans residues 1316–1326 (ETDDQSAEIEE). Residues 1327–1345 (ILFYINFAFIILFTGECVL) form a helical membrane-spanning segment. Over 1346–1357 (KITALRYHYFSI) the chain is Cytoplasmic. A helical transmembrane segment spans residues 1358 to 1375 (GWNIFDFVVVILSILGIG). The Extracellular portion of the chain corresponds to 1376 to 1388 (LADLIEKYFVSPT). The helical transmembrane segment at 1389–1405 (LFRVIRLARIGRVLRLI) threads the bilayer. Residues 1406-1424 (RGAKGIRTLLFALMMSLPA) lie on the Cytoplasmic side of the membrane. Residues 1425–1442 (LFNIGLLLFLIMFIFSIF) form a helical membrane-spanning segment. Residues 1443–1464 (GMSNFAYVKKEVGIDDMMNFET) are Extracellular-facing. The pore-forming intramembrane region spans 1465–1487 (FGNSIICMFMITTSAGWDGLLAP). Residues 1488 to 1516 (ILNSPPDCDPDVDNPGSTTRGNCGNAAVG) lie on the Extracellular side of the membrane. Cysteine 1495 and cysteine 1510 are disulfide-bonded. Residues 1517–1539 (IVFFCSYIVMSFLVVVNMYIAII) form a helical membrane-spanning segment. Topologically, residues 1540 to 1784 (LENFNVATEE…AADNLRESIV (245 aa)) are cytoplasmic. The 30-residue stretch at 1669 to 1698 (EEVAASTIQRAYRSHILKRCVKQASYMYRD) folds into the IQ domain.

Belongs to the sodium channel (TC 1.A.1.10) family. Nav1.4/SCN4A subfamily. Voltage-gated sodium (Nav) channels consist of an ion-conducting alpha subunit which is functional on its own associated with regulatory beta subunits. Lacks the cysteine which covalently binds the conotoxin GVIIJ. This cysteine (position 719) is speculated in other sodium channel subunits alpha to be implied in covalent binding with the sodium channel subunit beta-2 or beta-4. Expressed in skeletal muscle, heart, brain, spinal cord, and eye.

It localises to the cell membrane. It carries out the reaction Na(+)(in) = Na(+)(out). In terms of biological role, pore-forming subunit of a voltage-gated sodium (Nav) channel that directly mediates the depolarizing phase of action potentials in excitable membranes. Navs, also called VGSCs (voltage-gated sodium channels) or VDSCs (voltage-dependent sodium channels), operate by switching between closed and open conformations depending on the voltage difference across the membrane. In the open conformation they allow Na(+) ions to selectively pass through the pore, along their electrochemical gradient. The influx of Na+ ions provokes membrane depolarization, initiating the propagation of electrical signals throughout cells and tissues. In Danio rerio (Zebrafish), this protein is Sodium channel protein type 4 subunit alpha B (scn4ab).